We begin with the raw amino-acid sequence, 187 residues long: UPF0398 protein MW1336 (187 aa).

The protein belongs to the UPF0398 family.

In Staphylococcus aureus (strain MW2), this protein is UPF0398 protein MW1336.